The following is a 602-amino-acid chain: Ligand-dependent nuclear receptor corepressor-like protein (602 aa).

Positions 104-124 (PSLDSSQSTPTEELSSQGQSN) are disordered. Residues 106–124 (LDSSQSTPTEELSSQGQSN) show a composition bias toward polar residues. Glycyl lysine isopeptide (Lys-Gly) (interchain with G-Cter in SUMO2) cross-links involve residues K242, K319, K340, and K397. 2 disordered regions span residues 495 to 521 (TVDGTSENTEDGLDRKDSKQPRKKRGR) and 564 to 602 (ERSGTLKTPPKKKLRLPDTGLYNMTDSGTGSCKNSSKPV). The HTH psq-type domain maps to 516–568 (RKKRGRYRQYDHEIMEEAIAMVMSGKMSVSKAQGIYGVPHSTLEYKVKERSGT). The H-T-H motif DNA-binding region spans 544 to 564 (VSKAQGIYGVPHSTLEYKVKE). Residues 585 to 602 (YNMTDSGTGSCKNSSKPV) show a composition bias toward polar residues.

The protein resides in the nucleus. In terms of biological role, may act as transcription activator that binds DNA elements with the sequence 5'-CCCTATCGATCGATCTCTACCT-3'. May play a role in spermatogenesis. The sequence is that of Ligand-dependent nuclear receptor corepressor-like protein (LCORL) from Homo sapiens (Human).